Consider the following 449-residue polypeptide: Exodeoxyribonuclease 7 large subunit (449 aa).

It belongs to the XseA family. As to quaternary structure, heterooligomer composed of large and small subunits.

Its subcellular location is the cytoplasm. The enzyme catalyses Exonucleolytic cleavage in either 5'- to 3'- or 3'- to 5'-direction to yield nucleoside 5'-phosphates.. Bidirectionally degrades single-stranded DNA into large acid-insoluble oligonucleotides, which are then degraded further into small acid-soluble oligonucleotides. The chain is Exodeoxyribonuclease 7 large subunit from Salmonella newport (strain SL254).